The chain runs to 171 residues: uncharacterized protein (171 aa).

The 169-residue stretch at 3 to 171 folds into the PfpI endopeptidase domain; that stretch reads KKVAIILANE…FNREIVKQLQ (169 aa).

Belongs to the peptidase C56 family.

This is an uncharacterized protein from Staphylococcus aureus (strain MRSA252).